An 887-amino-acid chain; its full sequence is Bifunctional uridylyltransferase/uridylyl-removing enzyme (887 aa).

A uridylyltransferase region spans residues 1–329 (MKGLNAKPFS…FPDEEAVTTI (329 aa)). The tract at residues 330-686 (INERFQKRGD…TRAAETGAGV (357 aa)) is uridylyl-removing. The region spanning 448 to 570 (VDEHILMVVR…MRDERHLIAL (123 aa)) is the HD domain. ACT domains follow at residues 687 to 772 (EVLV…GRLS) and 796 to 871 (VLSI…PETP). Positions 864 to 887 (TSPQPETPGKAPGKPSAGDRIIPR) are disordered.

Belongs to the GlnD family. Mg(2+) is required as a cofactor.

It catalyses the reaction [protein-PII]-L-tyrosine + UTP = [protein-PII]-uridylyl-L-tyrosine + diphosphate. The catalysed reaction is [protein-PII]-uridylyl-L-tyrosine + H2O = [protein-PII]-L-tyrosine + UMP + H(+). Uridylyltransferase (UTase) activity is inhibited by glutamine, while glutamine activates uridylyl-removing (UR) activity. Modifies, by uridylylation and deuridylylation, the PII regulatory proteins (GlnB and homologs), in response to the nitrogen status of the cell that GlnD senses through the glutamine level. Under low glutamine levels, catalyzes the conversion of the PII proteins and UTP to PII-UMP and PPi, while under higher glutamine levels, GlnD hydrolyzes PII-UMP to PII and UMP (deuridylylation). Thus, controls uridylylation state and activity of the PII proteins, and plays an important role in the regulation of nitrogen assimilation and metabolism. This is Bifunctional uridylyltransferase/uridylyl-removing enzyme from Nitrosospira multiformis (strain ATCC 25196 / NCIMB 11849 / C 71).